A 515-amino-acid polypeptide reads, in one-letter code: 1-pyrroline-5-carboxylate dehydrogenase (515 aa).

Residues E286 and C320 contribute to the active site.

Belongs to the aldehyde dehydrogenase family. RocA subfamily.

The catalysed reaction is L-glutamate 5-semialdehyde + NAD(+) + H2O = L-glutamate + NADH + 2 H(+). The protein operates within amino-acid degradation; L-proline degradation into L-glutamate; L-glutamate from L-proline: step 2/2. The sequence is that of 1-pyrroline-5-carboxylate dehydrogenase from Bacillus cereus (strain B4264).